We begin with the raw amino-acid sequence, 642 residues long: Sec1 family domain-containing protein 1 (642 aa).

Residue alanine 2 is modified to N-acetylalanine. Phosphoserine occurs at positions 37, 303, and 528.

The protein belongs to the STXBP/unc-18/SEC1 family. In terms of assembly, interacts with STX17. Interacts with STX5A. Interacts with the COG complex via COG4.

Its subcellular location is the cytoplasm. It localises to the endoplasmic reticulum membrane. The protein localises to the golgi apparatus. The protein resides in the golgi stack membrane. Its function is as follows. Plays a role in SNARE-pin assembly and Golgi-to-ER retrograde transport via its interaction with COG4. Involved in vesicular transport between the endoplasmic reticulum and the Golgi. The protein is Sec1 family domain-containing protein 1 (SCFD1) of Homo sapiens (Human).